Reading from the N-terminus, the 360-residue chain is S-adenosylmethionine-dependent nucleotide dehydratase RSAD2 (360 aa).

The tract at residues 44-71 (KGQPRVRGEPKETQETHEDPGSAQPTTP) is disordered. Basic and acidic residues predominate over residues 49-63 (VRGEPKETQETHEDP). Residues 68–288 (PTTPVSVNYH…LQRHKDVSCL (221 aa)) form the Radical SAM core domain. The [4Fe-4S] cluster site is built by cysteine 82, cysteine 86, and cysteine 89. The residue at position 196 (lysine 196) is an N6-acetyllysine. Lysine 205 is covalently cross-linked (Glycyl lysine isopeptide (Lys-Gly) (interchain with G-Cter in ubiquitin)).

It belongs to the radical SAM superfamily. RSAD2 family. As to quaternary structure, homodimer. Interacts with IRAK1 and TRAF6. Interacts with FPPS. Interacts with HADHB. Interacts (via C-terminus) with VAPA/VAP33 (via C-terminus). [4Fe-4S] cluster serves as cofactor. In terms of processing, acetylated by HAT1. HAT1-mediated acetylation of Lys-196 in turn recruits UBE4A that stimulates RSAD2 polyubiquitination leading to proteasomal degradation. Post-translationally, 'Lys-6'-linked polyubiquitination at Lys-205 leads to RSAD2 protein degradation. As to expression, in neonatal rat tibia, specifically localized in cells of the periosteum, in osteoblasts lining endosteal and peristeal bone surfaces, to articular surfaces of cartilage and in perichondral cells but not in chondrocytes (at protein level). Expressed predominantly in bone marrow and spleen.

The protein localises to the endoplasmic reticulum membrane. It localises to the golgi apparatus. The protein resides in the endoplasmic reticulum. Its subcellular location is the lipid droplet. It is found in the mitochondrion. The protein localises to the mitochondrion inner membrane. It localises to the mitochondrion outer membrane. It carries out the reaction CTP + AH2 + S-adenosyl-L-methionine = 3'-deoxy-3',4'-didehydro-CTP + 5'-deoxyadenosine + L-methionine + A + H2O + H(+). Its activity is regulated as follows. IRAK1 and TRAF6 synergistically activate RSAD2 increasing its activity with CTP as substrate about 10-fold. Interferon-inducible antiviral protein which plays a major role in the cell antiviral state induced by type I and type II interferon. Catalyzes the conversion of cytidine triphosphate (CTP) to 3'-deoxy-3',4'-didehydro-CTP (ddhCTP) via a SAM-dependent radical mechanism. In turn, ddhCTP acts as a chain terminator for the RNA-dependent RNA polymerases from multiple viruses and directly inhibits viral replication. Therefore, inhibits a wide range of DNA and RNA viruses. Also promotes TLR7 and TLR9-dependent production of IFN-beta production in plasmacytoid dendritic cells (pDCs) by facilitating 'Lys-63'-linked ubiquitination of IRAK1 by TRAF6. Plays a role in CD4+ T-cells activation and differentiation. Facilitates T-cell receptor (TCR)-mediated GATA3 activation and optimal T-helper 2 (Th2) cytokine production by modulating NFKB1 and JUNB activities. Can inhibit secretion of soluble proteins. In Rattus norvegicus (Rat), this protein is S-adenosylmethionine-dependent nucleotide dehydratase RSAD2.